The following is a 464-amino-acid chain: Forkhead box protein N3 (464 aa).

2 disordered regions span residues 1–53 and 85–108; these read MGPI…EKGG and PVQDIDDDTPPSPAQSDMPYDAKQ. Residues 14-30 show a composition bias toward polar residues; sequence TGISVSSQCYRSSTLSN. Residues 113 to 209 constitute a DNA-binding region (fork-head); the sequence is KPPYSFSCLI…QALKKTPYHP (97 aa). Disordered regions lie at residues 294–337 and 381–428; these read MESE…SSSA and LVES…MKEA. A compositionally biased stretch (low complexity) spans 316 to 336; the sequence is SSAKSANKRSSSPSDSISSSS. A compositionally biased stretch (basic residues) spans 389–401; the sequence is QHKKKQHLLKLRR.

It is found in the nucleus. In terms of biological role, acts as a transcriptional repressor. May be involved in DNA damage-inducible cell cycle arrests (checkpoints). The chain is Forkhead box protein N3 from Xenopus tropicalis (Western clawed frog).